Consider the following 120-residue polypeptide: Small ribosomal subunit protein uS13 (120 aa).

The disordered stretch occupies residues 96-120; that stretch reads PCRGQRTRTNARTRKGPRKAIAGKK.

It belongs to the universal ribosomal protein uS13 family. Part of the 30S ribosomal subunit. Forms a loose heterodimer with protein S19. Forms two bridges to the 50S subunit in the 70S ribosome.

Located at the top of the head of the 30S subunit, it contacts several helices of the 16S rRNA. In the 70S ribosome it contacts the 23S rRNA (bridge B1a) and protein L5 of the 50S subunit (bridge B1b), connecting the 2 subunits; these bridges are implicated in subunit movement. Contacts the tRNAs in the A and P-sites. The protein is Small ribosomal subunit protein uS13 of Neisseria gonorrhoeae (strain ATCC 700825 / FA 1090).